Here is a 126-residue protein sequence, read N- to C-terminus: Glycine cleavage system H protein (126 aa).

One can recognise a Lipoyl-binding domain in the interval 23–104 (TLTVGITDHA…PYESWLFKIK (82 aa)). K64 bears the N6-lipoyllysine mark.

Belongs to the GcvH family. In terms of assembly, the glycine cleavage system is composed of four proteins: P, T, L and H. The cofactor is (R)-lipoate.

In terms of biological role, the glycine cleavage system catalyzes the degradation of glycine. The H protein shuttles the methylamine group of glycine from the P protein to the T protein. This chain is Glycine cleavage system H protein, found in Paraburkholderia xenovorans (strain LB400).